The primary structure comprises 111 residues: Large ribosomal subunit protein P2-2 (111 aa).

A disordered region spans residues 86–111; that stretch reads APAAAAAKKDEPEEEADDDMGFGLFD.

The protein belongs to the eukaryotic ribosomal protein P1/P2 family. P1 and P2 exist as dimers at the large ribosomal subunit. Post-translationally, phosphorylated.

In terms of biological role, plays an important role in the elongation step of protein synthesis. The polypeptide is Large ribosomal subunit protein P2-2 (LIP') (Leishmania infantum).